Here is a 197-residue protein sequence, read N- to C-terminus: dITP/XTP pyrophosphatase (197 aa).

Residue 7 to 12 (TGNEQK) participates in substrate binding. Positions 44 and 73 each coordinate Mg(2+). The Proton acceptor role is filled by D73. Substrate is bound by residues T74, 156-159 (FGYD), K179, and 184-185 (HR).

The protein belongs to the HAM1 NTPase family. Homodimer. It depends on Mg(2+) as a cofactor.

The catalysed reaction is XTP + H2O = XMP + diphosphate + H(+). It catalyses the reaction dITP + H2O = dIMP + diphosphate + H(+). The enzyme catalyses ITP + H2O = IMP + diphosphate + H(+). Pyrophosphatase that catalyzes the hydrolysis of nucleoside triphosphates to their monophosphate derivatives, with a high preference for the non-canonical purine nucleotides XTP (xanthosine triphosphate), dITP (deoxyinosine triphosphate) and ITP. Seems to function as a house-cleaning enzyme that removes non-canonical purine nucleotides from the nucleotide pool, thus preventing their incorporation into DNA/RNA and avoiding chromosomal lesions. This chain is dITP/XTP pyrophosphatase, found in Elusimicrobium minutum (strain Pei191).